The primary structure comprises 656 residues: MPGTMQCLGAEYLVSAEKTRQREWRPQIYRKCTDTPWLVLFFLFWTGLVFIMGYSVVAGAAGRLLFGYDSFGNVCGKKNSPVEGAPLSGQDMTLKKHVFFMNACNLEVKDRGLGPTALCVSSCPEKQLDTLEEVQLFANINGSFLCVYSLNSFNYTQSSSADTLCPRLPVPPSKPFPLFNRCIPQTPECYSLFASVLINDADALHRILSGIMAGRDTILGLCVFTFALSLAMLFAFRFISTLLIHIIISLVILGLLFVCGVLWWLYYDYTNDLSTELDTEKENMNCMLAFAIISTVVTVLLLALIFTLRKRIKLTVELLHVTNKAISSCPFLLFQPLWTCAILIFFWVLWVAVLLSLGTAGTAQVMEGGQVEYKPLSGIRYMWWYHLIGLIWTSEFILACQRMTVAGAMVACYFNRNQNDPPARPILSSLFVLFCYHQGTAVKGSFLLTVTRIPRVIFMCIYSTLKEPQRSAWSRGEFRCSHCGLWCLLKYLYHLNQDAYTATAINGTDFCTSAKDAHTIIAKNSSHLTSVNCFGNFVIFLGKVLVVCFSIFGGLMAFNYSRALQVWAIPLLLVAFFACVVAHSFLSVFETALDILFLCFAVDLETNDGSSEKPYFMDPGFLSVIKRTNNLNNAKSQGQKDALPNEEGTELQPIVR.

A helical transmembrane segment spans residues 37-57 (WLVLFFLFWTGLVFIMGYSVV). N-linked (GlcNAc...) asparagine glycans are attached at residues Asn-141 and Asn-154. The next 5 helical transmembrane spans lie at 216–236 (DTIL…LFAF), 242–262 (LLIH…CGVL), 288–308 (LAFA…IFTL), 337–357 (LWTC…LLSL), and 381–401 (YMWW…LACQ). N-linked (GlcNAc...) asparagine glycans are attached at residues Asn-506 and Asn-524. Residues 537-557 (FVIFLGKVLVVCFSIFGGLMA) traverse the membrane as a helical segment. The N-linked (GlcNAc...) asparagine glycan is linked to Asn-559. Residues 566-586 (VWAIPLLLVAFFACVVAHSFL) form a helical membrane-spanning segment. Residues 634 to 656 (AKSQGQKDALPNEEGTELQPIVR) form a disordered region.

The protein belongs to the CTL (choline transporter-like) family.

The protein localises to the membrane. The protein is Choline transporter-like protein 3 (Slc44a3) of Mus musculus (Mouse).